The sequence spans 974 residues: Collagen alpha-1(I) chain (974 aa).

Over residues 1-14 (GISVPGPMGPSGPR) the composition is skewed to low complexity. The interval 1–974 (GISVPGPMGP…PGPPGPPGPP (974 aa)) is disordered. 10 positions are modified to 4-hydroxyproline: Pro-17, Pro-20, Pro-23, Pro-32, Pro-35, Pro-38, Pro-53, Pro-68, Pro-75, and Pro-81. Positions 25–44 (PQGFQGPPGEPGEPGASGPM) are enriched in low complexity. Positions 56-73 (NGDDGEAGKPGRPGERRG) are enriched in basic and acidic residues. At Lys-84 the chain carries 5-hydroxylysine; alternate. Lys-84 carries an O-linked (Gal...) hydroxylysine; alternate glycan. Ser-90 bears the Phosphoserine mark. The span at 98-114 (DAGPAGPKGEPGSPGEN) shows a compositional bias: low complexity. Pro-108, Pro-111, Pro-117, Pro-126, Pro-132, Pro-153, Pro-162, Pro-165, Pro-192, Pro-195, Pro-207, Pro-213, Pro-222, Pro-228, Pro-231, and Pro-245 each carry 4-hydroxyproline. Low complexity predominate over residues 132–150 (PGASGPAGARGNDGATGAA). Over residues 152–164 (PPGPTGPAGPPGF) the composition is skewed to pro residues. Residues 198–228 (AGAAGPAGNPGADGQPGAKGANGAPGIAGAP) are compositionally biased toward low complexity. Lys-248 carries the 5-hydroxylysine modification. 8 positions are modified to 4-hydroxyproline: Pro-254, Pro-257, Pro-269, Pro-278, Pro-293, Pro-299, Pro-308, and Pro-314. The segment covering 303 to 312 (GERGGPGSRG) has biased composition (gly residues). Lys-323 is subject to 5-hydroxylysine. A 4-hydroxyproline mark is found at Pro-328, Pro-337, Pro-343, Pro-349, Pro-358, Pro-361, Pro-370, Pro-379, Pro-385, Pro-397, Pro-406, Pro-415, Pro-418, Pro-436, Pro-454, Pro-460, Pro-466, Pro-472, Pro-484, Pro-493, Pro-505, Pro-520, Pro-527, and Pro-536. Residues 352–378 (KGLTGSPGSPGPDGKTGPPGPAGQDGR) are compositionally biased toward low complexity. Residues 387-406 (ARGQAGVMGFPGPKGAAGEP) show a composition bias toward low complexity. A compositionally biased stretch (low complexity) spans 504 to 517 (APGNDGAKGDAGAP). Lys-548 carries the 5-hydroxylysine modification. Residues Pro-554, Pro-569, and Pro-575 each carry the 4-hydroxyproline modification. Low complexity predominate over residues 581 to 595 (SGPSGPAGPTGARGA). Ser-584 bears the Phosphoserine mark. A 4-hydroxyproline mark is found at Pro-596, Pro-602, Pro-605, Pro-614, Pro-620, Pro-638, Pro-647, and Pro-656. The segment covering 608-635 (AGFAGPPGADGQPGAKGEPGDAGAKGDA) has biased composition (low complexity). Residues 637–649 (PPGPAGPTGPPGP) are compositionally biased toward pro residues. A 5-hydroxylysine modification is found at Lys-659. Over residues 664-680 (SAGPPGATGFPGAAGRV) the composition is skewed to low complexity. 4-hydroxyproline occurs at positions 668 and 674. At Pro-682 the chain carries 3-hydroxyproline. Residues Pro-683, Pro-692, Pro-695, Pro-716, Pro-725, Pro-733, Pro-742, Pro-760, Pro-769, Pro-772, Pro-778, Pro-793, Pro-799, Pro-805, Pro-814, and Pro-820 each carry the 4-hydroxyproline modification. Residues 709–718 (ETGPAGRPGE) are compositionally biased toward low complexity. A compositionally biased stretch (low complexity) spans 730–742 (KGSPGADGPAGAP). Residues 792-802 (PPGPVGPPGLA) show a composition bias toward pro residues. Positions 804-826 (PPGESGREGSPGAEGSPGRDGSP) are enriched in low complexity. The span at 828–844 (PKGPPGAPGAPGAPGPV) shows a compositional bias: pro residues. The residue at position 829 (Lys-829) is a 5-hydroxylysine. 3 positions are modified to 4-hydroxyproline: Pro-832, Pro-835, and Pro-838. The segment covering 865-879 (AGPAGARGPAGPQGP) has biased composition (low complexity). Over residues 880–894 (RGDKGETGEQGDRRG) the composition is skewed to basic and acidic residues. A 5-hydroxylysine modification is found at Lys-883. 4 positions are modified to 4-hydroxyproline: Pro-905, Pro-908, Pro-926, and Pro-941. Residues 908–941 (PGEQGPSGASGPAGPRGPPGSAGSPGKDGLNGLP) are compositionally biased toward low complexity. 3-hydroxyproline is present on Pro-946. The residue at position 947 (Pro-947) is a 4-hydroxyproline. Pro residues predominate over residues 959–974 (VGPPGPPGPPGPPGPP). Pro-961 bears the 3-hydroxyproline mark. Pro-962 is subject to 4-hydroxyproline. At Pro-964 the chain carries 3-hydroxyproline. Pro-965 is subject to 4-hydroxyproline. The residue at position 967 (Pro-967) is a 3-hydroxyproline. 4-hydroxyproline is present on residues Pro-968, Pro-971, and Pro-974.

It belongs to the fibrillar collagen family. As to quaternary structure, trimers of one alpha 2(I) and two alpha 1(I) chains. Contains mostly 4-hydroxyproline. Proline residues at the third position of the tripeptide repeating unit (G-X-Y) are hydroxylated in some or all of the chains. In terms of processing, contains 3-hydroxyproline at a few sites. This modification occurs on the first proline residue in the sequence motif Gly-Pro-Hyp, where Hyp is 4-hydroxyproline. Post-translationally, lysine residues at the third position of the tripeptide repeating unit (G-X-Y) are 5-hydroxylated in some or all of the chains. O-glycosylated on hydroxylated lysine residues. The O-linked glycan consists of a Glc-Gal disaccharide. As to expression, expressed in bones.

The protein localises to the secreted. Its subcellular location is the extracellular space. It localises to the extracellular matrix. Its function is as follows. Type I collagen is a member of group I collagen (fibrillar forming collagen). This chain is Collagen alpha-1(I) chain, found in Scelidodon sp. (strain SLP-2019) (South American ground sloth).